Reading from the N-terminus, the 491-residue chain is NADH-quinone oxidoreductase subunit N 1 (491 aa).

14 helical membrane passes run V15–F35, V41–Y61, F77–F97, L105–V125, L130–F150, L165–M185, P211–F231, P247–N269, W279–V299, M307–S327, A333–I353, L378–F398, L416–V436, and L459–T479.

The protein belongs to the complex I subunit 2 family. In terms of assembly, NDH-1 is composed of 14 different subunits. Subunits NuoA, H, J, K, L, M, N constitute the membrane sector of the complex.

The protein localises to the cell membrane. The enzyme catalyses a quinone + NADH + 5 H(+)(in) = a quinol + NAD(+) + 4 H(+)(out). In terms of biological role, NDH-1 shuttles electrons from NADH, via FMN and iron-sulfur (Fe-S) centers, to quinones in the respiratory chain. The immediate electron acceptor for the enzyme in this species is believed to be ubiquinone. Couples the redox reaction to proton translocation (for every two electrons transferred, four hydrogen ions are translocated across the cytoplasmic membrane), and thus conserves the redox energy in a proton gradient. The protein is NADH-quinone oxidoreductase subunit N 1 of Herpetosiphon aurantiacus (strain ATCC 23779 / DSM 785 / 114-95).